Here is a 127-residue protein sequence, read N- to C-terminus: Small ribosomal subunit protein uS11 (127 aa).

Belongs to the universal ribosomal protein uS11 family. As to quaternary structure, part of the 30S ribosomal subunit.

Located on the platform of the 30S subunit. The sequence is that of Small ribosomal subunit protein uS11 from Picrophilus torridus (strain ATCC 700027 / DSM 9790 / JCM 10055 / NBRC 100828 / KAW 2/3).